The following is a 191-amino-acid chain: Uridylate kinase (191 aa).

Position 12 to 17 (12 to 17) interacts with ATP; the sequence is GAGKGT. An NMP region spans residues 33–63; sequence SAGDCLREEQNRPGSKYGNLIKEYIKDGKIV. Residues arginine 39, 61–63, 91–94, and glutamine 98 contribute to the a ribonucleoside 5'-phosphate site; these read KIV and GFPR. Residues 128 to 138 are LID; it reads HRGKTSGRSDD. Position 129 (arginine 129) interacts with ATP. A ribonucleoside 5'-phosphate contacts are provided by arginine 135 and arginine 146. Residue glutamine 174 coordinates ATP.

It belongs to the adenylate kinase family. UMP-CMP kinase subfamily. In terms of assembly, monomer. Mg(2+) serves as cofactor.

Its subcellular location is the cytoplasm. The protein resides in the nucleus. It carries out the reaction UMP + ATP = UDP + ADP. Catalyzes the phosphorylation of pyrimidine nucleoside monophosphates at the expense of ATP. Plays an important role in de novo pyrimidine nucleotide biosynthesis. Has preference for UMP and dUMP as phosphate acceptors, but can also use CMP, dCMP and AMP. In Schizosaccharomyces pombe (strain 972 / ATCC 24843) (Fission yeast), this protein is Uridylate kinase.